Consider the following 154-residue polypeptide: Protein X (154 aa).

The segment at 68–117 is mitochondrial targeting sequence; it reads PCALRFTSARRMETTVNAHQILPKVLHKRTLGLSAMSTTDLEAYFKDCLF.

The protein belongs to the orthohepadnavirus protein X family. May form homodimer. May interact with host CEBPA, CFLAR, CREB1, DDB1, E4F1, HBXIP, HSPD1/HSP60, NFKBIA, POLR2E and SMAD4. Interacts with host SMC5-SMC6 complex and induces its degradation. Interacts with host TRPC4AP; leading to prevent ubiquitination of TRPC4AP. Interacts with host PLSCR1; this interaction promotes ubiquitination and degradation of HBx and impairs HBx-mediated cell proliferation. In terms of processing, a fraction may be phosphorylated in insect cells and HepG2 cells, a human hepatoblastoma cell line. Phosphorylated in vitro by host protein kinase C or mitogen-activated protein kinase. N-acetylated in insect cells.

It localises to the host cytoplasm. The protein resides in the host nucleus. Its subcellular location is the host mitochondrion. In terms of biological role, multifunctional protein that plays a role in silencing host antiviral defenses and promoting viral transcription. Does not seem to be essential for HBV infection. May be directly involved in development of cirrhosis and liver cancer (hepatocellular carcinoma). Most of cytosolic activities involve modulation of cytosolic calcium. The effect on apoptosis is controversial depending on the cell types in which the studies have been conducted. May induce apoptosis by localizing in mitochondria and causing loss of mitochondrial membrane potential. May also modulate apoptosis by binding host CFLAR, a key regulator of the death-inducing signaling complex (DISC). Promotes viral transcription by using the host E3 ubiquitin ligase DDB1 to target the SMC5-SMC6 complex to proteasomal degradation. This host complex would otherwise bind to viral episomal DNA, and prevents its transcription. Moderately stimulates transcription of many different viral and cellular transcription elements. Promoters and enhancers stimulated by HBx contain DNA binding sites for NF-kappa-B, AP-1, AP-2, c-EBP, ATF/CREB, or the calcium-activated factor NF-AT. This is Protein X from Hepatitis B virus genotype E subtype ayw4 (isolate Kou) (HBV-E).